Here is a 111-residue protein sequence, read N- to C-terminus: uncharacterized protein (111 aa).

This sequence belongs to the SUI1 family.

This is an uncharacterized protein from Synechocystis sp. (strain ATCC 27184 / PCC 6803 / Kazusa).